We begin with the raw amino-acid sequence, 26 residues long: Acetylcholine receptor subunit delta (26 aa).

This sequence belongs to the ligand-gated ion channel (TC 1.A.9) family. Acetylcholine receptor (TC 1.A.9.1) subfamily. Pentamer of two alpha chains, and one each of the beta, delta, and gamma chains.

The protein localises to the postsynaptic cell membrane. The protein resides in the cell membrane. It carries out the reaction K(+)(in) = K(+)(out). The catalysed reaction is Na(+)(in) = Na(+)(out). Functionally, after binding acetylcholine, the AChR responds by an extensive change in conformation that affects all subunits and leads to opening of an ion-conducting channel across the plasma membrane. The chain is Acetylcholine receptor subunit delta (chrnd) from Electrophorus electricus (Electric eel).